The primary structure comprises 412 residues: Imidazolonepropionase (412 aa).

The Fe(3+) site is built by histidine 71 and histidine 73. Zn(2+) is bound by residues histidine 71 and histidine 73. 3 residues coordinate 4-imidazolone-5-propanoate: arginine 80, tyrosine 143, and histidine 176. An N-formimidoyl-L-glutamate-binding site is contributed by tyrosine 143. Histidine 241 contributes to the Fe(3+) binding site. Histidine 241 serves as a coordination point for Zn(2+). A 4-imidazolone-5-propanoate-binding site is contributed by glutamine 244. Aspartate 316 serves as a coordination point for Fe(3+). Residue aspartate 316 coordinates Zn(2+). Residues asparagine 318 and glycine 320 each coordinate N-formimidoyl-L-glutamate. Residue threonine 321 participates in 4-imidazolone-5-propanoate binding.

The protein belongs to the metallo-dependent hydrolases superfamily. HutI family. It depends on Zn(2+) as a cofactor. Fe(3+) is required as a cofactor.

The protein localises to the cytoplasm. It catalyses the reaction 4-imidazolone-5-propanoate + H2O = N-formimidoyl-L-glutamate. Its pathway is amino-acid degradation; L-histidine degradation into L-glutamate; N-formimidoyl-L-glutamate from L-histidine: step 3/3. Functionally, catalyzes the hydrolytic cleavage of the carbon-nitrogen bond in imidazolone-5-propanoate to yield N-formimidoyl-L-glutamate. It is the third step in the universal histidine degradation pathway. The protein is Imidazolonepropionase of Aromatoleum aromaticum (strain DSM 19018 / LMG 30748 / EbN1) (Azoarcus sp. (strain EbN1)).